Reading from the N-terminus, the 174-residue chain is Phospholipase A2-like protein Y52B11A.8 (174 aa).

The N-terminal stretch at 1-18 is a signal peptide; it reads MRGLLVATWIFVSVAASA. N49 and N143 each carry an N-linked (GlcNAc...) asparagine glycan. The disordered stretch occupies residues 137–174; that stretch reads YEASGPNASTTEESPAEKDDYDYESHVAGLNATPSSST.

Belongs to the phospholipase A2 family.

It is found in the secreted. In Caenorhabditis elegans, this protein is Phospholipase A2-like protein Y52B11A.8.